A 128-amino-acid chain; its full sequence is Disintegrin lebein-2-alpha (128 aa).

Residues 1–20 (MIQVLLVTICLAVFPFHGSS) form the signal peptide. Positions 21-46 (IILESGNVNDYEVVYPKKVTLLPTGA) are excised as a propeptide. A Disintegrin domain is found at 47–111 (MNSANPCCDP…SDCPRNPWKS (65 aa)). Cystine bridges form between Cys53-Cys76, Cys67-Cys73, Cys72-Cys97, and Cys85-Cys104. A Cell attachment site; atypical (MLD) motif is present at residues 89 to 91 (MLD). The propeptide occupies 112–128 (EEDEMKWSATAKGSVLM).

Belongs to the disintegrin family. Dimeric disintegrin subfamily. In terms of assembly, heterodimer with subunit beta; disulfide-linked. Expressed by the venom gland.

Its subcellular location is the secreted. In terms of biological role, inhibits ADP-induced human platelet aggregation. Antagonist of alpha-IIb/beta-3 (ITGA2B/ITGB3). Also avidly binds to the laminin-binding beta-1 integrins (alpha-3/beta-1 (ITGA3/ITGB1), alpha-6/beta-1 (ITGA6/ITGB1), and alpha-7/beta-1 (ITGA7/ITGB1)) in an RGD-independent manner. The polypeptide is Disintegrin lebein-2-alpha (Macrovipera lebetinus (Levantine viper)).